A 112-amino-acid chain; its full sequence is T cell receptor alpha variable 34 (112 aa).

A signal peptide spans 1 to 21 (METVLQVLLGILGFQAAWVSS). The Ig-like domain occupies 22-112 (QELEQSPQSL…HAGIYLCGAD (91 aa)). Asn38 and Asn42 each carry an N-linked (GlcNAc...) asparagine glycan. Cys43 and Cys109 are oxidised to a cystine.

In terms of assembly, alpha-beta TR is a heterodimer composed of an alpha and beta chain; disulfide-linked. The alpha-beta TR is associated with the transmembrane signaling CD3 coreceptor proteins to form the TR-CD3 (TcR or TCR). The assembly of alpha-beta TR heterodimers with CD3 occurs in the endoplasmic reticulum where a single alpha-beta TR heterodimer associates with one CD3D-CD3E heterodimer, one CD3G-CD3E heterodimer and one CD247 homodimer forming a stable octameric structure. CD3D-CD3E and CD3G-CD3E heterodimers preferentially associate with TR alpha and TR beta chains, respectively. The association of the CD247 homodimer is the last step of TcR assembly in the endoplasmic reticulum and is required for transport to the cell surface.

It localises to the cell membrane. V region of the variable domain of T cell receptor (TR) alpha chain that participates in the antigen recognition. Alpha-beta T cell receptors are antigen specific receptors which are essential to the immune response and are present on the cell surface of T lymphocytes. Recognize peptide-major histocompatibility (MH) (pMH) complexes that are displayed by antigen presenting cells (APC), a prerequisite for efficient T cell adaptive immunity against pathogens. Binding of alpha-beta TR to pMH complex initiates TR-CD3 clustering on the cell surface and intracellular activation of LCK that phosphorylates the ITAM motifs of CD3G, CD3D, CD3E and CD247 enabling the recruitment of ZAP70. In turn ZAP70 phosphorylates LAT, which recruits numerous signaling molecules to form the LAT signalosome. The LAT signalosome propagates signal branching to three major signaling pathways, the calcium, the mitogen-activated protein kinase (MAPK) kinase and the nuclear factor NF-kappa-B (NF-kB) pathways, leading to the mobilization of transcription factors that are critical for gene expression and essential for T cell growth and differentiation. The T cell repertoire is generated in the thymus, by V-(D)-J rearrangement. This repertoire is then shaped by intrathymic selection events to generate a peripheral T cell pool of self-MH restricted, non-autoaggressive T cells. Post-thymic interaction of alpha-beta TR with the pMH complexes shapes TR structural and functional avidity. This Homo sapiens (Human) protein is T cell receptor alpha variable 34.